Reading from the N-terminus, the 203-residue chain is Pyridoxine/pyridoxamine 5'-phosphate oxidase (203 aa).

Residues 50-55 (RMVLLK), 65-66 (YT), Lys72, and Gln94 each bind FMN. A substrate-binding site is contributed by Lys55. Residues Tyr112, Arg116, and Ser120 each coordinate substrate. FMN contacts are provided by residues 129–130 (QS) and Trp174. Position 180-182 (180-182 (RLH)) interacts with substrate. An FMN-binding site is contributed by Arg184.

It belongs to the pyridoxamine 5'-phosphate oxidase family. In terms of assembly, homodimer. Requires FMN as cofactor.

It carries out the reaction pyridoxamine 5'-phosphate + O2 + H2O = pyridoxal 5'-phosphate + H2O2 + NH4(+). The enzyme catalyses pyridoxine 5'-phosphate + O2 = pyridoxal 5'-phosphate + H2O2. The protein operates within cofactor metabolism; pyridoxal 5'-phosphate salvage; pyridoxal 5'-phosphate from pyridoxamine 5'-phosphate: step 1/1. It participates in cofactor metabolism; pyridoxal 5'-phosphate salvage; pyridoxal 5'-phosphate from pyridoxine 5'-phosphate: step 1/1. Functionally, catalyzes the oxidation of either pyridoxine 5'-phosphate (PNP) or pyridoxamine 5'-phosphate (PMP) into pyridoxal 5'-phosphate (PLP). This is Pyridoxine/pyridoxamine 5'-phosphate oxidase from Brucella anthropi (strain ATCC 49188 / DSM 6882 / CCUG 24695 / JCM 21032 / LMG 3331 / NBRC 15819 / NCTC 12168 / Alc 37) (Ochrobactrum anthropi).